We begin with the raw amino-acid sequence, 54 residues long: Large ribosomal subunit protein bL33 (54 aa).

Belongs to the bacterial ribosomal protein bL33 family.

This chain is Large ribosomal subunit protein bL33, found in Legionella pneumophila (strain Lens).